The following is a 179-amino-acid chain: Large ribosomal subunit protein uL5 (179 aa).

This sequence belongs to the universal ribosomal protein uL5 family. Part of the 50S ribosomal subunit; part of the 5S rRNA/L5/L18/L25 subcomplex. Contacts the 5S rRNA and the P site tRNA. Forms a bridge to the 30S subunit in the 70S ribosome.

Its function is as follows. This is one of the proteins that bind and probably mediate the attachment of the 5S RNA into the large ribosomal subunit, where it forms part of the central protuberance. In the 70S ribosome it contacts protein S13 of the 30S subunit (bridge B1b), connecting the 2 subunits; this bridge is implicated in subunit movement. Contacts the P site tRNA; the 5S rRNA and some of its associated proteins might help stabilize positioning of ribosome-bound tRNAs. The sequence is that of Large ribosomal subunit protein uL5 from Yersinia pestis.